The sequence spans 272 residues: CDAN1-interacting nuclease 1 (272 aa).

Its subcellular location is the nucleus. It is found in the cytoplasm. Functionally, may play a role in erythroid cell differentiation. This chain is CDAN1-interacting nuclease 1 (CDIN1), found in Gallus gallus (Chicken).